Here is a 215-residue protein sequence, read N- to C-terminus: UPF0126 membrane protein DR_2368 (215 aa).

A run of 6 helical transmembrane segments spans residues 15 to 35 (LHWLDLIGVLAFAMSGALLGV), 39 to 59 (FDLFGVLVLGAVTAVGGGAIR), 75 to 95 (TYLWTALLGALLAFAFGERLA), 101 to 121 (LSLFDSAGLALFATSGALGAI), 123 to 143 (IGLGPLGVVFAGMLSGVGGGI), and 162 to 182 (LYATAAAAGAGAVWLLAPHFT).

This sequence belongs to the UPF0126 family.

Its subcellular location is the cell membrane. This chain is UPF0126 membrane protein DR_2368, found in Deinococcus radiodurans (strain ATCC 13939 / DSM 20539 / JCM 16871 / CCUG 27074 / LMG 4051 / NBRC 15346 / NCIMB 9279 / VKM B-1422 / R1).